We begin with the raw amino-acid sequence, 1818 residues long: Cytadherence high molecular weight protein 2 (1818 aa).

Coiled-coil stretches lie at residues 31-880 (LESA…KQRE), 919-1607 (ELKI…DNKH), 1644-1755 (HLFE…QAVQ), and 1786-1817 (LATQ…QKAA).

In terms of processing, phosphorylated mainly on serine residues.

Functionally, component of the cytoskeleton-like structure which stabilizes the shape of the wall-less Mycoplasma. This cytoskeleton-like network of accessory proteins containing HMW proteins 1 to 5 allows the proper anchoring of cytadhesin proteins in the mycoplasmal membrane at the attachment organelle. This Mycoplasma pneumoniae (strain ATCC 29342 / M129 / Subtype 1) (Mycoplasmoides pneumoniae) protein is Cytadherence high molecular weight protein 2 (hmw2).